The sequence spans 393 residues: NAD(P)H-quinone oxidoreductase subunit H, chloroplastic (393 aa).

Belongs to the complex I 49 kDa subunit family. NDH is composed of at least 16 different subunits, 5 of which are encoded in the nucleus.

The protein localises to the plastid. Its subcellular location is the chloroplast thylakoid membrane. The enzyme catalyses a plastoquinone + NADH + (n+1) H(+)(in) = a plastoquinol + NAD(+) + n H(+)(out). It carries out the reaction a plastoquinone + NADPH + (n+1) H(+)(in) = a plastoquinol + NADP(+) + n H(+)(out). In terms of biological role, NDH shuttles electrons from NAD(P)H:plastoquinone, via FMN and iron-sulfur (Fe-S) centers, to quinones in the photosynthetic chain and possibly in a chloroplast respiratory chain. The immediate electron acceptor for the enzyme in this species is believed to be plastoquinone. Couples the redox reaction to proton translocation, and thus conserves the redox energy in a proton gradient. This Carica papaya (Papaya) protein is NAD(P)H-quinone oxidoreductase subunit H, chloroplastic.